The following is a 222-amino-acid chain: Sortase A (222 aa).

Topologically, residues 1–7 (MLKKTIA) are cytoplasmic. A helical membrane pass occupies residues 8–28 (IIILIIGLLLIFSPFIKNGIV). Topologically, residues 29–222 (KYMSGHETIE…ELENKYFPSK (194 aa)) are extracellular. Histidine 127 acts as the Proton donor/acceptor in catalysis. Residue cysteine 188 is the Acyl-thioester intermediate of the active site.

Belongs to the bacterial sortase family. Class A subfamily.

It localises to the cell membrane. With respect to regulation, activity is enhanced by Zn(2+) and strongly enhanced by Ca(2+). Inhibited by chalcone, a precursor of several flavonoids, which blocks the SrtA active site. Its function is as follows. Transpeptidase that anchors surface proteins to the cell wall. Recognizes and modifies its substrate by proteolytic cleavage of a C-terminal sorting signal. Following cleavage, a covalent intermediate is formed via a thioester bond between the sortase and its substrate, which is then transferred and covalently attached to the cell wall. This sortase recognizes a Leu-Pro-x-Thr-Gly (LPXTG) motif, which is cleaved by the sortase between the threonine and glycine residues. Involved in pathogenesis. May regulate the rate of synthesis and/or the stability of a subset of LPXTG proteins. Not involved in cell wall-anchoring of Hbp2 (SvpA) or Hbp1. In Listeria monocytogenes serovar 1/2a (strain ATCC BAA-679 / EGD-e), this protein is Sortase A.